A 531-amino-acid chain; its full sequence is Protein SHORT-ROOT (531 aa).

Positions 14–39 (QQSDSIITNQSSLSRTSTTTTGSPQT) are enriched in low complexity. Disordered regions lie at residues 14-40 (QQSDSIITNQSSLSRTSTTTTGSPQTA) and 65-103 (SSSSSHHNHHNHNNPNTYYSPFTTPTQYHPATSSTPSST). Over residues 81-93 (TYYSPFTTPTQYH) the composition is skewed to polar residues. Over residues 94 to 103 (PATSSTPSST) the composition is skewed to low complexity. Residues 134 to 529 (FDFSANAKWA…QPVVWASAWR (396 aa)) enclose the GRAS domain. The segment at 141–206 (KWADSVLLEA…GSGERCYRTM (66 aa)) is leucine repeat I (LRI). A VHIID region spans residues 225–290 (VLKFQEVSPW…DDTPHLRLTT (66 aa)). The short motif at 256-260 (IHIVD) is the VHIID element. The interval 310-343 (EIGNRMEKFARLMGVPFKFNIIHHVGDLSEFDLN) is leucine repeat II (LRII). Positions 353–449 (LAINCVGAMH…ERAAGRAIVD (97 aa)) are PFYRE. Residues 452–529 (ACEPSDSTER…QPVVWASAWR (78 aa)) form an SAW region.

Belongs to the GRAS family. In terms of assembly, interacts with SCR, SCL23, JKD and MGP. Interacts with SIEL. Association to endosomes and intercellular movement of SHR rely on the interaction with SIEL. As to expression, expressed in the stele and the quiescent center. Not detected in the ground tissue cell lineage. The SHR protein moves from the stele to a single layer of adjacent cells, where it enters the nucleus.

It is found in the cytoplasm. The protein localises to the nucleus. It localises to the early endosome. The protein resides in the late endosome. Its subcellular location is the recycling endosome. Functionally, transcription factor required for quiescent center cells specification and maintenance of surrounding stem cells, and for the asymmetric cell division involved in radial pattern formation in roots. Essential for both cell division and cell specification. Regulates the radial organization of the shoot axial organs and is required for normal shoot gravitropism. Directly controls the transcription of SCR, and when associated with SCR, of MGP, RLK, TRI, NUC and SCL3. In Arabidopsis thaliana (Mouse-ear cress), this protein is Protein SHORT-ROOT.